Here is a 546-residue protein sequence, read N- to C-terminus: Probable E3 ubiquitin-protein ligase NGR_a03640 (546 aa).

The segment at 1-70 (MNVQRPGLAV…RPWEGRPQEA (70 aa)) is disordered. Residues 1–248 (MNVQRPGLAV…YAGPQIFLPM (248 aa)) form an interaction with target proteins region. Low complexity predominate over residues 22–48 (SEPGSPAAAARWVEASTEAEASAASSS). Residues 58-67 (AEERPWEGRP) are compositionally biased toward basic and acidic residues. LRR repeat units follow at residues 104–125 (GLRRLNVNNNQLGDLPDTLPGT), 126–144 (LLELEASENRLTRLPDLPA), 145–166 (GLQRLNVENNRLTNLPEPLPAA), 167–186 (LEWLGAGYNQLTRLPEMIPP), and 187–208 (ELIWLGARNNQLTSVPESLLTQ). Positions 249-256 (GPVELARR) are linker. The region spanning 257 to 546 (PLHEVVADWL…KVLRGRGLEL (290 aa)) is the NEL domain. Positions 257–546 (PLHEVVADWL…KVLRGRGLEL (290 aa)) are E3 ubiquitin-protein ligase catalytic domain. Cys-338 (glycyl thioester intermediate) is an active-site residue.

This sequence belongs to the LRR-containing bacterial E3 ligase family. In terms of processing, ubiquitinated in the presence of host E1 ubiquitin-activating enzyme, E2 ubiquitin-conjugating enzyme and ubiquitin.

The protein localises to the secreted. It localises to the host cytoplasm. Effector proteins function to alter host cell physiology and promote bacterial survival in host tissues. This protein is an E3 ubiquitin ligase that interferes with host's ubiquitination pathway. The sequence is that of Probable E3 ubiquitin-protein ligase NGR_a03640 from Sinorhizobium fredii (strain NBRC 101917 / NGR234).